We begin with the raw amino-acid sequence, 308 residues long: GATA transcription factor 10 (308 aa).

A GATA-type zinc finger spans residues Asp214 to Pro268.

The protein belongs to the type IV zinc-finger family. Class A subfamily.

The protein resides in the nucleus. Its function is as follows. Transcriptional activator that specifically binds 5'-GATA-3' or 5'-GAT-3' motifs within gene promoters. May be involved in the regulation of some light-responsive genes. This Arabidopsis thaliana (Mouse-ear cress) protein is GATA transcription factor 10 (GATA10).